The following is a 106-amino-acid chain: Urease subunit beta (106 aa).

The protein belongs to the urease beta subunit family. Heterotrimer of UreA (gamma), UreB (beta) and UreC (alpha) subunits. Three heterotrimers associate to form the active enzyme.

The protein localises to the cytoplasm. It carries out the reaction urea + 2 H2O + H(+) = hydrogencarbonate + 2 NH4(+). It functions in the pathway nitrogen metabolism; urea degradation; CO(2) and NH(3) from urea (urease route): step 1/1. The protein is Urease subunit beta of Prochlorococcus marinus (strain MIT 9301).